A 360-amino-acid polypeptide reads, in one-letter code: Phenylalanine--tRNA ligase alpha subunit (360 aa).

Glu-260 serves as a coordination point for Mg(2+).

This sequence belongs to the class-II aminoacyl-tRNA synthetase family. Phe-tRNA synthetase alpha subunit type 1 subfamily. In terms of assembly, tetramer of two alpha and two beta subunits. It depends on Mg(2+) as a cofactor.

It is found in the cytoplasm. The enzyme catalyses tRNA(Phe) + L-phenylalanine + ATP = L-phenylalanyl-tRNA(Phe) + AMP + diphosphate + H(+). This is Phenylalanine--tRNA ligase alpha subunit from Bradyrhizobium sp. (strain BTAi1 / ATCC BAA-1182).